We begin with the raw amino-acid sequence, 92 residues long: DNA-directed RNA polymerase subunit Rpo11 (92 aa).

It belongs to the archaeal Rpo11/eukaryotic RPB11/RPC19 RNA polymerase subunit family. In terms of assembly, part of the RNA polymerase complex.

The protein resides in the cytoplasm. The enzyme catalyses RNA(n) + a ribonucleoside 5'-triphosphate = RNA(n+1) + diphosphate. Its function is as follows. DNA-dependent RNA polymerase (RNAP) catalyzes the transcription of DNA into RNA using the four ribonucleoside triphosphates as substrates. In Methanosarcina barkeri (strain Fusaro / DSM 804), this protein is DNA-directed RNA polymerase subunit Rpo11.